A 277-amino-acid polypeptide reads, in one-letter code: Putative phosphoenolpyruvate synthase regulatory protein (277 aa).

157-164 (GVSRSGKT) is a binding site for ADP.

It belongs to the pyruvate, phosphate/water dikinase regulatory protein family. PSRP subfamily.

It catalyses the reaction [pyruvate, water dikinase] + ADP = [pyruvate, water dikinase]-phosphate + AMP + H(+). The catalysed reaction is [pyruvate, water dikinase]-phosphate + phosphate + H(+) = [pyruvate, water dikinase] + diphosphate. In terms of biological role, bifunctional serine/threonine kinase and phosphorylase involved in the regulation of the phosphoenolpyruvate synthase (PEPS) by catalyzing its phosphorylation/dephosphorylation. The sequence is that of Putative phosphoenolpyruvate synthase regulatory protein from Vibrio cholerae serotype O1 (strain ATCC 39541 / Classical Ogawa 395 / O395).